We begin with the raw amino-acid sequence, 585 residues long: Protein DENND6B (585 aa).

The uDENN domain maps to 43 to 214 (ECVCVVTFDL…LPVMGVVVQV (172 aa)). In terms of domain architecture, cDENN spans 246–373 (VHELDLFRCF…VKLKKPSRLK (128 aa)). The dDENN domain occupies 375 to 499 (LDTKPGLYTA…KSPHFDGWYR (125 aa)).

Belongs to the DENND6 family.

The protein resides in the recycling endosome. It localises to the cytoplasm. Its function is as follows. Guanine nucleotide exchange factor (GEF) for RAB14. Also has some, lesser GEF activity towards RAB35. In Homo sapiens (Human), this protein is Protein DENND6B (DENND6B).